The primary structure comprises 480 residues: Methylenetetrahydrofolate--tRNA-(uracil-5-)-methyltransferase TrmFO (480 aa).

15-20 (GGGLAG) contributes to the FAD binding site.

Belongs to the MnmG family. TrmFO subfamily. Requires FAD as cofactor.

The protein resides in the cytoplasm. It carries out the reaction uridine(54) in tRNA + (6R)-5,10-methylene-5,6,7,8-tetrahydrofolate + NADH + H(+) = 5-methyluridine(54) in tRNA + (6S)-5,6,7,8-tetrahydrofolate + NAD(+). It catalyses the reaction uridine(54) in tRNA + (6R)-5,10-methylene-5,6,7,8-tetrahydrofolate + NADPH + H(+) = 5-methyluridine(54) in tRNA + (6S)-5,6,7,8-tetrahydrofolate + NADP(+). Its function is as follows. Catalyzes the folate-dependent formation of 5-methyl-uridine at position 54 (M-5-U54) in all tRNAs. The polypeptide is Methylenetetrahydrofolate--tRNA-(uracil-5-)-methyltransferase TrmFO (Sinorhizobium medicae (strain WSM419) (Ensifer medicae)).